The chain runs to 162 residues: Small ribosomal subunit protein uS19 (162 aa).

Basic residues predominate over residues 1–27 (MAKQKKFSGKGSARSKRKQNRKQVGPR). A disordered region spans residues 1 to 29 (MAKQKKFSGKGSARSKRKQNRKQVGPRRR).

This sequence belongs to the universal ribosomal protein uS19 family.

In terms of biological role, protein S19 forms a complex with S13 that binds strongly to the 16S ribosomal RNA. The protein is Small ribosomal subunit protein uS19 of Methanococcus aeolicus (strain ATCC BAA-1280 / DSM 17508 / OCM 812 / Nankai-3).